An 87-amino-acid polypeptide reads, in one-letter code: Cytochrome c6 (87 aa).

Positions 14, 17, 18, and 58 each coordinate heme c.

This sequence belongs to the cytochrome c family. PetJ subfamily. In terms of assembly, monomer. Binds 1 heme c group covalently per subunit.

It localises to the cellular thylakoid lumen. Its function is as follows. Functions as an electron carrier between membrane-bound cytochrome b6-f and photosystem I in oxygenic photosynthesis. The sequence is that of Cytochrome c6 (petJ) from Aphanizomenon flos-aquae.